We begin with the raw amino-acid sequence, 298 residues long: GTP cyclohydrolase FolE2 (298 aa).

This sequence belongs to the GTP cyclohydrolase IV family.

It carries out the reaction GTP + H2O = 7,8-dihydroneopterin 3'-triphosphate + formate + H(+). Its pathway is cofactor biosynthesis; 7,8-dihydroneopterin triphosphate biosynthesis; 7,8-dihydroneopterin triphosphate from GTP: step 1/1. Functionally, converts GTP to 7,8-dihydroneopterin triphosphate. This Neisseria meningitidis serogroup C (strain 053442) protein is GTP cyclohydrolase FolE2.